The following is a 341-amino-acid chain: Dihydroorotate dehydrogenase (quinone) (341 aa).

Residues 61–65 and threonine 85 contribute to the FMN site; that span reads AGLDK. Lysine 65 is a binding site for substrate. 110 to 114 provides a ligand contact to substrate; that stretch reads NRMGF. FMN-binding residues include asparagine 138 and asparagine 171. Residue asparagine 171 participates in substrate binding. Serine 174 functions as the Nucleophile in the catalytic mechanism. Asparagine 176 contacts substrate. The FMN site is built by lysine 216 and threonine 244. Residue 245–246 participates in substrate binding; that stretch reads NT. FMN-binding positions include glycine 267, glycine 296, and 317–318; that span reads YS.

The protein belongs to the dihydroorotate dehydrogenase family. Type 2 subfamily. As to quaternary structure, monomer. It depends on FMN as a cofactor.

Its subcellular location is the cell membrane. It carries out the reaction (S)-dihydroorotate + a quinone = orotate + a quinol. It participates in pyrimidine metabolism; UMP biosynthesis via de novo pathway; orotate from (S)-dihydroorotate (quinone route): step 1/1. In terms of biological role, catalyzes the conversion of dihydroorotate to orotate with quinone as electron acceptor. The protein is Dihydroorotate dehydrogenase (quinone) of Pseudomonas fluorescens (strain SBW25).